Here is a 435-residue protein sequence, read N- to C-terminus: GTPase Obg (435 aa).

One can recognise an Obg domain in the interval 1-159 (MAFIDKCKIV…VEVLLELKTI (159 aa)). The OBG-type G domain maps to 160–329 (ADIGIIGLPN…MLDDVIKIYF (170 aa)). Residues 166–173 (GLPNAGKS), 191–195 (FTTLN), 212–215 (DIPG), 282–285 (NKID), and 310–312 (SAL) each bind GTP. Residues serine 173 and threonine 193 each coordinate Mg(2+). Residues 357-435 (KSKELDKTIE…IYDITLEFEE (79 aa)) form the OCT domain.

The protein belongs to the TRAFAC class OBG-HflX-like GTPase superfamily. OBG GTPase family. As to quaternary structure, monomer. Requires Mg(2+) as cofactor.

The protein resides in the cytoplasm. An essential GTPase which binds GTP, GDP and possibly (p)ppGpp with moderate affinity, with high nucleotide exchange rates and a fairly low GTP hydrolysis rate. Plays a role in control of the cell cycle, stress response, ribosome biogenesis and in those bacteria that undergo differentiation, in morphogenesis control. This is GTPase Obg from Ureaplasma parvum serovar 3 (strain ATCC 27815 / 27 / NCTC 11736).